The following is a 370-amino-acid chain: E3 ubiquitin-protein ligase E3D (370 aa).

Position 2 is an N-acetylalanine (Ala-2). Positions 129-159 (PLPSENWSALVGEWCCHPDPFANKPLHPREN) match the BRAT1-like motif motif. Cys-144 serves as a coordination point for Zn(2+). The tract at residues 214-236 (QPSEGSFPNIPRSQFVQSVIARC) is interaction with UBE2C. The interval 332-368 (LPSTTCLELLLILSRNNASLPLSLRQMNSFQLWCSHC) is HECT-like.

In terms of assembly, interacts with UBE2C/UbcH10 (E2 ubiquitin-conjugating enzyme). In vitro, interacts with cyclin-B. Post-translationally, ubiquitinated by UBCH10 (E2 ubiquitin-conjugating enzyme).

The protein resides in the cytoplasm. It carries out the reaction S-ubiquitinyl-[E2 ubiquitin-conjugating enzyme]-L-cysteine + [acceptor protein]-L-lysine = [E2 ubiquitin-conjugating enzyme]-L-cysteine + N(6)-ubiquitinyl-[acceptor protein]-L-lysine.. It participates in protein modification; protein ubiquitination. Functionally, E3 ubiquitin-protein ligase which accepts ubiquitin from specific E2 ubiquitin-conjugating enzymes, and transfers it to substrates, generally promoting their degradation by the proteasome. Independently of its E3 ubiquitin-protein ligase activity, acts as an inhibitor of CPSF3 endonuclease activity by blocking CPSF3 active site. In Rattus norvegicus (Rat), this protein is E3 ubiquitin-protein ligase E3D (Ube3d).